Here is a 124-residue protein sequence, read N- to C-terminus: Putative peptidyl-tRNA hydrolase (124 aa).

It belongs to the PTH2 family.

It carries out the reaction an N-acyl-L-alpha-aminoacyl-tRNA + H2O = an N-acyl-L-amino acid + a tRNA + H(+). In Fowlpox virus (strain NVSL) (FPV), this protein is Putative peptidyl-tRNA hydrolase.